Here is a 195-residue protein sequence, read N- to C-terminus: Shikimate kinase (195 aa).

ATP is bound at residue 31-36 (GAGKSC). Serine 35 is a Mg(2+) binding site. Residues aspartate 53, arginine 77, and glycine 99 each contribute to the substrate site. ATP is bound at residue arginine 137. Arginine 156 contacts substrate.

This sequence belongs to the shikimate kinase family. As to quaternary structure, monomer. It depends on Mg(2+) as a cofactor.

It localises to the cytoplasm. It carries out the reaction shikimate + ATP = 3-phosphoshikimate + ADP + H(+). It participates in metabolic intermediate biosynthesis; chorismate biosynthesis; chorismate from D-erythrose 4-phosphate and phosphoenolpyruvate: step 5/7. Its function is as follows. Catalyzes the specific phosphorylation of the 3-hydroxyl group of shikimic acid using ATP as a cosubstrate. This is Shikimate kinase from Paramagnetospirillum magneticum (strain ATCC 700264 / AMB-1) (Magnetospirillum magneticum).